Here is a 380-residue protein sequence, read N- to C-terminus: Cytochrome b (380 aa).

Helical transmembrane passes span 34–54 (FGSL…LLAM), 78–99 (WLIR…FLHI), 114–134 (WNTG…GYVL), and 179–199 (FFAL…IHLT). The heme b site is built by histidine 84 and histidine 98. Heme b-binding residues include histidine 183 and histidine 197. Residue histidine 202 coordinates a ubiquinone. The next 4 membrane-spanning stretches (helical) occupy residues 227–247 (IKDI…ALFS), 289–309 (LGGV…PFLH), 321–341 (LSQT…WIGS), and 348–368 (FIII…ILFP).

It belongs to the cytochrome b family. The cytochrome bc1 complex contains 11 subunits: 3 respiratory subunits (MT-CYB, CYC1 and UQCRFS1), 2 core proteins (UQCRC1 and UQCRC2) and 6 low-molecular weight proteins (UQCRH/QCR6, UQCRB/QCR7, UQCRQ/QCR8, UQCR10/QCR9, UQCR11/QCR10 and a cleavage product of UQCRFS1). This cytochrome bc1 complex then forms a dimer. Requires heme b as cofactor.

The protein localises to the mitochondrion inner membrane. Its function is as follows. Component of the ubiquinol-cytochrome c reductase complex (complex III or cytochrome b-c1 complex) that is part of the mitochondrial respiratory chain. The b-c1 complex mediates electron transfer from ubiquinol to cytochrome c. Contributes to the generation of a proton gradient across the mitochondrial membrane that is then used for ATP synthesis. The polypeptide is Cytochrome b (MT-CYB) (Coturnix japonica (Japanese quail)).